Reading from the N-terminus, the 494-residue chain is Transcription termination factor MTERF4, chloroplastic (494 aa).

The transit peptide at 1–54 directs the protein to the chloroplast; that stretch reads MMKSLLFSAHPTSLLLPAPRLRRLLRLRAASSASASAPPRADRRSPGTPSRRPS. 2 disordered regions span residues 32 to 61 and 457 to 494; these read SASASAPPRADRRSPGTPSRRPSSSLYARP and VEEMEREDSSDMNASVDEVESEEYEDSDYGDSDDEFVR. Residues 46 to 56 are compositionally biased toward low complexity; it reads PGTPSRRPSSS. Acidic residues-rich tracts occupy residues 457–466 and 473–494; these read VEEMEREDSS and DEVESEEYEDSDYGDSDDEFVR.

Belongs to the mTERF family.

The protein localises to the plastid. It is found in the chloroplast stroma. Transcription termination factor required for processing and steady-state levels of plastid transcripts. Required for splicing of the chloroplastic group II intron. Required for the accumulation of 16S and 23S ribosomes. In Zea mays (Maize), this protein is Transcription termination factor MTERF4, chloroplastic.